The chain runs to 436 residues: F-box/LRR-repeat protein 20 (436 aa).

The 47-residue stretch at 22–68 (AVINKKLPKELLLRIFSFLDVVTLCRCAQVSRAWNVLALDGSNWQRI) folds into the F-box domain. LRR repeat units follow at residues 74-100 (QRDI…SLRG), 101-126 (CLGV…NLNG), 127-152 (CTKT…DLAS), 153-178 (CTSI…NISW), 179-204 (CDQV…FLKG), 205-230 (CTQL…NLQT), 231-256 (CLQI…CASG), 257-282 (CSNI…EVAR), 283-308 (CSQL…DLEE), 309-334 (CVQI…SLSH), 335-363 (CELI…ELDN), 364-388 (CPLI…ELYD), and 389-414 (CQQI…AYFA). Position 417 is a phosphothreonine (Thr417). Ser421 is modified (phosphoserine).

Interacts with SKP1 and CUL1.

Its subcellular location is the cytoplasm. In terms of biological role, substrate-recognition component of the SCF (SKP1-CUL1-F-box protein)-type E3 ubiquitin ligase complex. Role in neural transmission. The protein is F-box/LRR-repeat protein 20 (FBXL20) of Bos taurus (Bovine).